A 206-amino-acid polypeptide reads, in one-letter code: Thymidylate kinase (206 aa).

Position 11-18 (11-18 (GIDGAGKT)) interacts with ATP.

It belongs to the thymidylate kinase family.

The catalysed reaction is dTMP + ATP = dTDP + ADP. Phosphorylation of dTMP to form dTDP in both de novo and salvage pathways of dTTP synthesis. The polypeptide is Thymidylate kinase (Burkholderia cenocepacia (strain ATCC BAA-245 / DSM 16553 / LMG 16656 / NCTC 13227 / J2315 / CF5610) (Burkholderia cepacia (strain J2315))).